A 438-amino-acid polypeptide reads, in one-letter code: 3-phosphoshikimate 1-carboxyvinyltransferase (438 aa).

3-phosphoshikimate is bound by residues Lys-21, Ser-22, and Arg-26. Phosphoenolpyruvate is bound at residue Lys-21. The phosphoenolpyruvate site is built by Gly-95 and Arg-123. Ser-167, Gln-169, Asp-315, and Lys-342 together coordinate 3-phosphoshikimate. Gln-169 lines the phosphoenolpyruvate pocket. The active-site Proton acceptor is Asp-315. Phosphoenolpyruvate contacts are provided by Arg-346 and Arg-387.

The protein belongs to the EPSP synthase family. Monomer.

The protein localises to the cytoplasm. It carries out the reaction 3-phosphoshikimate + phosphoenolpyruvate = 5-O-(1-carboxyvinyl)-3-phosphoshikimate + phosphate. It functions in the pathway metabolic intermediate biosynthesis; chorismate biosynthesis; chorismate from D-erythrose 4-phosphate and phosphoenolpyruvate: step 6/7. Catalyzes the transfer of the enolpyruvyl moiety of phosphoenolpyruvate (PEP) to the 5-hydroxyl of shikimate-3-phosphate (S3P) to produce enolpyruvyl shikimate-3-phosphate and inorganic phosphate. The chain is 3-phosphoshikimate 1-carboxyvinyltransferase from Coxiella burnetii (strain CbuK_Q154) (Coxiella burnetii (strain Q154)).